A 1079-amino-acid chain; its full sequence is Isoleucine--tRNA ligase (1079 aa).

Positions 53–63 (PFANGLPHYGH) match the 'HIGH' region motif. The 'KMSKS' region signature appears at 611–615 (KLSKR). Lysine 614 is a binding site for ATP.

Belongs to the class-I aminoacyl-tRNA synthetase family. IleS type 2 subfamily. As to quaternary structure, monomer. Zn(2+) serves as cofactor.

The protein localises to the cytoplasm. The enzyme catalyses tRNA(Ile) + L-isoleucine + ATP = L-isoleucyl-tRNA(Ile) + AMP + diphosphate. Functionally, catalyzes the attachment of isoleucine to tRNA(Ile). As IleRS can inadvertently accommodate and process structurally similar amino acids such as valine, to avoid such errors it has two additional distinct tRNA(Ile)-dependent editing activities. One activity is designated as 'pretransfer' editing and involves the hydrolysis of activated Val-AMP. The other activity is designated 'posttransfer' editing and involves deacylation of mischarged Val-tRNA(Ile). In Rickettsia canadensis (strain McKiel), this protein is Isoleucine--tRNA ligase.